Consider the following 290-residue polypeptide: Protease HtpX (290 aa).

2 consecutive transmembrane segments (helical) span residues 4-24 and 36-56; these read IMLF…TLKL and GSLL…SLFI. Position 142 (histidine 142) interacts with Zn(2+). Residue glutamate 143 is part of the active site. Histidine 146 contributes to the Zn(2+) binding site. The next 2 helical transmembrane spans lie at 150–170 and 193–213; these read GDMV…MFFA and FIAT…IVMW. Glutamate 219 contributes to the Zn(2+) binding site.

It belongs to the peptidase M48B family. It depends on Zn(2+) as a cofactor.

The protein resides in the cell inner membrane. The protein is Protease HtpX of Ectopseudomonas mendocina (strain ymp) (Pseudomonas mendocina).